We begin with the raw amino-acid sequence, 157 residues long: MSVEVNNESGVELPEAELVRLSRFVFEKLYLHPQTELSIILADREAMEKLHVEWMYEPGATDVLSFPMDELRPGTVSRPAPAGLLGDIVICPQVAQEQAQAGGHSVEDELLLLTTHGLLHLLGYDHEDPEEKAEMFGLQRELLTSFLGRDAPAETTA.

Zn(2+)-binding residues include histidine 116, histidine 120, and histidine 126.

The protein belongs to the endoribonuclease YbeY family. The cofactor is Zn(2+).

Its subcellular location is the cytoplasm. Functionally, single strand-specific metallo-endoribonuclease involved in late-stage 70S ribosome quality control and in maturation of the 3' terminus of the 16S rRNA. This chain is Endoribonuclease YbeY, found in Renibacterium salmoninarum (strain ATCC 33209 / DSM 20767 / JCM 11484 / NBRC 15589 / NCIMB 2235).